A 264-amino-acid chain; its full sequence is Phosphonoacetaldehyde hydrolase (264 aa).

The Nucleophile role is filled by Asp-9. Positions 9 and 11 each coordinate Mg(2+). Lys-50 acts as the Schiff-base intermediate with substrate in catalysis. Asp-183 contributes to the Mg(2+) binding site.

The protein belongs to the HAD-like hydrolase superfamily. PhnX family. Homodimer. Mg(2+) serves as cofactor.

It carries out the reaction phosphonoacetaldehyde + H2O = acetaldehyde + phosphate + H(+). Its function is as follows. Involved in phosphonate degradation. This chain is Phosphonoacetaldehyde hydrolase, found in Bacillus cereus (strain AH820).